The following is a 195-amino-acid chain: 3-isopropylmalate dehydratase small subunit (195 aa).

This sequence belongs to the LeuD family. LeuD type 1 subfamily. In terms of assembly, heterodimer of LeuC and LeuD.

It catalyses the reaction (2R,3S)-3-isopropylmalate = (2S)-2-isopropylmalate. It participates in amino-acid biosynthesis; L-leucine biosynthesis; L-leucine from 3-methyl-2-oxobutanoate: step 2/4. Its function is as follows. Catalyzes the isomerization between 2-isopropylmalate and 3-isopropylmalate, via the formation of 2-isopropylmaleate. The sequence is that of 3-isopropylmalate dehydratase small subunit from Frankia alni (strain DSM 45986 / CECT 9034 / ACN14a).